The sequence spans 299 residues: Probable alpha-L-glutamate ligase (299 aa).

Positions 112-294 (LQLLTEQGIA…IALQMIVHIE (183 aa)) constitute an ATP-grasp domain. ATP-binding positions include Lys-148, 185–186 (DF), Asp-194, and 218–220 (RAN). Mg(2+) contacts are provided by Asp-255, Glu-267, and Asn-269. Positions 255, 267, and 269 each coordinate Mn(2+).

The protein belongs to the RimK family. Mg(2+) serves as cofactor. Requires Mn(2+) as cofactor.

The chain is Probable alpha-L-glutamate ligase from Histophilus somni (strain 2336) (Haemophilus somnus).